A 318-amino-acid chain; its full sequence is Myoblast determination protein 1 (318 aa).

Met1 is covalently cross-linked (Peptide (Met-Gly) (interchain with G-Cter in ubiquitin)). An N6-methyllysine; by EHMT2 modification is found at Lys104. A bHLH domain is found at Asp109–Leu160. Disordered stretches follow at residues Ala175–Tyr225 and Ala265–Leu318. Positions Ser196–Ser206 are enriched in polar residues. Residues Ala265–Pro274 show a composition bias toward low complexity. Polar residues-rich tracts occupy residues Leu287 to Ser298 and Ala307 to Leu318.

In terms of assembly, interacts with SUV39H1. Efficient DNA binding requires dimerization with another bHLH protein. Seems to form active heterodimers with ITF-2. Interacts with DDX5. Interacts with CHD2. Interacts with TSC22D3 isoform 1 and isoform 4. Interacts with SETD3. Interacts with P-TEFB complex; promotes the transcriptional activity of MYOD1 through its CDK9-mediated phosphorylation. Interacts with CSRP3. Interacts with NUPR1. Post-translationally, acetylated by a complex containing EP300 and PCAF. The acetylation is essential to activate target genes. Conversely, its deacetylation by SIRT1 inhibits its function. Ubiquitinated on the N-terminus; which is required for proteasomal degradation. In terms of processing, phosphorylated by CDK9. This phosphorylation promotes its function in muscle differentiation. Post-translationally, methylation at Lys-104 by EHMT2/G9a inhibits myogenic activity.

The protein localises to the nucleus. Its function is as follows. Acts as a transcriptional activator that promotes transcription of muscle-specific target genes and plays a role in muscle differentiation. Together with MYF5 and MYOG, co-occupies muscle-specific gene promoter core region during myogenesis. Induces fibroblasts to differentiate into myoblasts. Interacts with and is inhibited by the twist protein. This interaction probably involves the basic domains of both proteins. This Mus musculus (Mouse) protein is Myoblast determination protein 1 (Myod1).